A 1035-amino-acid chain; its full sequence is Cell-division control histidine kinase PdhS (1035 aa).

The segment at 1-613 is important for polar localization; sequence MSGSYPFIDI…HADGSEEPVD (613 aa). Positions 500–533 are disordered; the sequence is QGLANTRAESETPVSETSSIEPVEPTPPVKTRSE. An interaction with DivK region spans residues 614 to 1035; that stretch reads AHLNAIAWRG…VFPPTRVLAD (422 aa). In terms of domain architecture, PAS spans 659–730; the sequence is HVEELKTILD…YLHGLSGNGV (72 aa). In terms of domain architecture, Histidine kinase spans 802 to 1031; sequence RISHEIRTPL…VVEIVFPPTR (230 aa). H805 carries the phosphohistidine; by autocatalysis modification.

In terms of assembly, interacts with DivK.

It localises to the cytoplasm. It carries out the reaction ATP + protein L-histidine = ADP + protein N-phospho-L-histidine.. Its function is as follows. Functions as a polar differentiation marker. Essential protein that, by localizing in the old pole of dividing cells, controls cell division and maturation, probably through control of DivK phosphorylation status and cellular distribution, which in turn regulates CtrA, a transcriptional regulator of the minB operon. The asymmetrical localization of this protein is probably required for cells to enter a new division cycle. This is Cell-division control histidine kinase PdhS (pdhS) from Brucella melitensis biotype 1 (strain ATCC 23456 / CCUG 17765 / NCTC 10094 / 16M).